The chain runs to 246 residues: UDP-N-acetyl-D-mannosaminuronic acid transferase (246 aa).

This sequence belongs to the glycosyltransferase 26 family.

It catalyses the reaction UDP-N-acetyl-alpha-D-mannosaminouronate + N-acetyl-alpha-D-glucosaminyl-di-trans,octa-cis-undecaprenyl diphosphate = beta-D-ManNAcA-(1-&gt;4)-alpha-D-GlcNAc-di-trans,octa-cis-undecaprenyl diphosphate + UDP + H(+). It functions in the pathway bacterial outer membrane biogenesis; enterobacterial common antigen biosynthesis. Functionally, catalyzes the synthesis of Und-PP-GlcNAc-ManNAcA (Lipid II), the second lipid-linked intermediate involved in enterobacterial common antigen (ECA) synthesis. The polypeptide is UDP-N-acetyl-D-mannosaminuronic acid transferase (Salmonella paratyphi A (strain ATCC 9150 / SARB42)).